Here is a 676-residue protein sequence, read N- to C-terminus: Transketolase 7 (676 aa).

Histidine 36 is a substrate binding site. Thiamine diphosphate-binding positions include histidine 76 and 125 to 127 (GPL). Aspartate 166 is a binding site for Mg(2+). Positions 167 and 196 each coordinate thiamine diphosphate. The Mg(2+) site is built by asparagine 196 and isoleucine 198. 3 residues coordinate substrate: histidine 273, arginine 367, and serine 394. A thiamine diphosphate-binding site is contributed by histidine 273. The thiamine diphosphate site is built by glutamate 421 and phenylalanine 448. Glutamate 421 serves as the catalytic Proton donor. Substrate-binding residues include histidine 472, aspartate 480, and arginine 531.

The protein belongs to the transketolase family. Homodimer. Mg(2+) is required as a cofactor. The cofactor is Ca(2+). Requires Mn(2+) as cofactor. Co(2+) serves as cofactor. It depends on thiamine diphosphate as a cofactor. Leaves and roots.

It carries out the reaction D-sedoheptulose 7-phosphate + D-glyceraldehyde 3-phosphate = aldehydo-D-ribose 5-phosphate + D-xylulose 5-phosphate. Its function is as follows. Could be involved in the conversion of sugars, which are a major phenomenon in the rehydration process. In terms of biological role, catalyzes the transfer of a two-carbon ketol group from a ketose donor to an aldose acceptor, via a covalent intermediate with the cofactor thiamine pyrophosphate. The chain is Transketolase 7 (TKT7) from Craterostigma plantagineum (Blue gem).